Consider the following 513-residue polypeptide: GMP synthase [glutamine-hydrolyzing] (513 aa).

The Glutamine amidotransferase type-1 domain occupies 8 to 198 (KIIVLDYGSQ…ALNICGAKGN (191 aa)). Cysteine 85 serves as the catalytic Nucleophile. Residues histidine 172 and glutamate 174 contribute to the active site. The region spanning 199–388 (WSMENFIDMQ…LGMPDEIVWR (190 aa)) is the GMPS ATP-PPase domain. 226 to 232 (SGGVDSS) contacts ATP.

In terms of assembly, homodimer.

It catalyses the reaction XMP + L-glutamine + ATP + H2O = GMP + L-glutamate + AMP + diphosphate + 2 H(+). Its pathway is purine metabolism; GMP biosynthesis; GMP from XMP (L-Gln route): step 1/1. Its function is as follows. Catalyzes the synthesis of GMP from XMP. This chain is GMP synthase [glutamine-hydrolyzing] (guaA), found in Lactococcus lactis subsp. cremoris (strain MG1363).